Here is a 507-residue protein sequence, read N- to C-terminus: Glycerol kinase (507 aa).

Position 15 (threonine 15) interacts with ADP. Threonine 15, threonine 16, and serine 17 together coordinate ATP. Threonine 15 provides a ligand contact to sn-glycerol 3-phosphate. ADP is bound at residue arginine 19. Sn-glycerol 3-phosphate is bound by residues arginine 85, glutamate 86, tyrosine 137, and aspartate 250. Glycerol-binding residues include arginine 85, glutamate 86, tyrosine 137, aspartate 250, and glutamine 251. Residues threonine 272, glycine 316, and glycine 418 each contribute to the ADP site. Residues threonine 272, glycine 316, and glycine 418 each contribute to the ATP site.

Belongs to the FGGY kinase family.

It catalyses the reaction glycerol + ATP = sn-glycerol 3-phosphate + ADP + H(+). It functions in the pathway polyol metabolism; glycerol degradation via glycerol kinase pathway; sn-glycerol 3-phosphate from glycerol: step 1/1. Its activity is regulated as follows. Inhibited by fructose 1,6-bisphosphate (FBP). Functionally, key enzyme in the regulation of glycerol uptake and metabolism. Catalyzes the phosphorylation of glycerol to yield sn-glycerol 3-phosphate. This Malacoplasma penetrans (strain HF-2) (Mycoplasma penetrans) protein is Glycerol kinase.